Reading from the N-terminus, the 1049-residue chain is Cilia- and flagella-associated protein 337 (1049 aa).

The region spanning 81 to 116 (GTKEEYGELFDKVDVAQDGFINWDKLTSFILLELYE) is the EF-hand domain. 6 WD repeats span residues 138–177 (KHKDTIQKVIFLKNSSHYLTISKEGLLAIWGEHLKLQETF), 358–397 (NIAQGIHAFDYHSRLNLIATAGINNKVCLWNPYVVSKPVG), 401–440 (GHSASVIAVQFFVERKQLFSFSKDKVLRLWDIQHQLSIQR), 487–528 (SHEK…KQFT), 531–570 (HGNAEISTMALDANETRLLTGSTDGTVKIWDFNGYCHHTL), and 633–671 (QHHDDILCAAFLPPQTLVTGSYDGEIVLWNNSTENAHHV). The interval 691–712 (LLSAGRSQPSHPMADHSTTGVR) is disordered. A compositionally biased stretch (polar residues) spans 695-711 (GRSQPSHPMADHSTTGV). WD repeat units follow at residues 719-766 (EGKN…LLAE), 769-809 (AHSG…LNSS), and 825-866 (PHED…VWIF).

It belongs to the CFAP337 family. In terms of assembly, associates with components of the nexin-dynein regulatory complex (N-DRC) and the CFAP184:CFAP263 complex.

The protein localises to the cell projection. It is found in the cilium. Associates with components of the nexin-dynein regulatory complex (N-DRC), a key regulator of ciliary/flagellar motility, and might act as an inner dynein arm (IDA) hub or linkage. The polypeptide is Cilia- and flagella-associated protein 337 (Homo sapiens (Human)).